The sequence spans 183 residues: uncharacterized protein (183 aa).

The Macro domain occupies 1–182 (MFRVVHGDIT…VALKVLERDE (182 aa)).

This is an uncharacterized protein from Pyrococcus abyssi (strain GE5 / Orsay).